Consider the following 759-residue polypeptide: Fidgetin (759 aa).

Disordered stretches follow at residues 89-111 (SNYS…PWQP), 200-237 (SQAT…PGYN), 258-293 (VGSG…VPGY), and 337-429 (SYGQ…VMSE). Composition is skewed to pro residues over residues 221–232 (QPPPPPPPPPAL) and 266–289 (GAPP…PPTT). Polar residues-rich tracts occupy residues 337–347 (SYGQQRSTQSP) and 382–418 (LMPS…SSES). At Thr400 the chain carries Phosphothreonine. Residues Ala489 and 529–534 (GTGKTL) each bind ATP.

The protein belongs to the AAA ATPase family. In terms of assembly, interacts with AKAP8 (via C-terminus). Widely expressed.

The protein localises to the nucleus matrix. Its subcellular location is the cytoplasm. It is found in the cytoskeleton. The protein resides in the microtubule organizing center. It localises to the centrosome. In terms of biological role, ATP-dependent microtubule severing protein. Severs microtubules along their length and depolymerizes their ends, primarily the minus-end, suppressing microtubule growth from and attachment to centrosomes. Microtubule severing may promote rapid reorganization of cellular microtubule arrays and the release of microtubules from the centrosome following nucleation. Microtubule release from the mitotic spindle poles may allow depolymerization of the microtubule end proximal to the spindle pole, leading to poleward microtubule flux and poleward motion of chromosome. In Mus musculus (Mouse), this protein is Fidgetin (Fign).